The following is a 305-amino-acid chain: Aspartate carbamoyltransferase catalytic subunit (305 aa).

2 residues coordinate carbamoyl phosphate: Arg-54 and Thr-55. Lys-82 serves as a coordination point for L-aspartate. The carbamoyl phosphate site is built by Arg-104, His-132, and Gln-135. 2 residues coordinate L-aspartate: Arg-165 and Arg-218. The carbamoyl phosphate site is built by Gly-259 and Pro-260.

It belongs to the aspartate/ornithine carbamoyltransferase superfamily. ATCase family. Heterododecamer (2C3:3R2) of six catalytic PyrB chains organized as two trimers (C3), and six regulatory PyrI chains organized as three dimers (R2).

It carries out the reaction carbamoyl phosphate + L-aspartate = N-carbamoyl-L-aspartate + phosphate + H(+). Its pathway is pyrimidine metabolism; UMP biosynthesis via de novo pathway; (S)-dihydroorotate from bicarbonate: step 2/3. In terms of biological role, catalyzes the condensation of carbamoyl phosphate and aspartate to form carbamoyl aspartate and inorganic phosphate, the committed step in the de novo pyrimidine nucleotide biosynthesis pathway. This is Aspartate carbamoyltransferase catalytic subunit from Caldicellulosiruptor bescii (strain ATCC BAA-1888 / DSM 6725 / KCTC 15123 / Z-1320) (Anaerocellum thermophilum).